The chain runs to 134 residues: Large ribosomal subunit protein eL14y (134 aa).

The protein belongs to the eukaryotic ribosomal protein eL14 family.

The protein is Large ribosomal subunit protein eL14y (RPL14B) of Arabidopsis thaliana (Mouse-ear cress).